A 388-amino-acid chain; its full sequence is Ferrochelatase (388 aa).

Fe cation is bound by residues His-197 and Glu-278.

The protein belongs to the ferrochelatase family.

The protein resides in the cytoplasm. The catalysed reaction is heme b + 2 H(+) = protoporphyrin IX + Fe(2+). It functions in the pathway porphyrin-containing compound metabolism; protoheme biosynthesis; protoheme from protoporphyrin-IX: step 1/1. Functionally, catalyzes the ferrous insertion into protoporphyrin IX. This Thermosynechococcus vestitus (strain NIES-2133 / IAM M-273 / BP-1) protein is Ferrochelatase.